The following is a 231-amino-acid chain: Large ribosomal subunit protein uL1 (231 aa).

Belongs to the universal ribosomal protein uL1 family. In terms of assembly, part of the 50S ribosomal subunit.

Its function is as follows. Binds directly to 23S rRNA. The L1 stalk is quite mobile in the ribosome, and is involved in E site tRNA release. In terms of biological role, protein L1 is also a translational repressor protein, it controls the translation of the L11 operon by binding to its mRNA. The sequence is that of Large ribosomal subunit protein uL1 from Alcanivorax borkumensis (strain ATCC 700651 / DSM 11573 / NCIMB 13689 / SK2).